The primary structure comprises 536 residues: Apolipoprotein N-acyltransferase (536 aa).

7 helical membrane passes run 10-30 (IASGIILAWGWKRAVIALLAG), 42-62 (AWPVLFITFPIAVWLIDGSAA), 76-96 (WWFGFGYFVPGLYWIGYAFLV), 107-127 (AAICGLPAYLALFTALGFALA), 136-158 (LRILSLAVSLTISEWLRGHLLTG), 181-201 (IGIWGLTLLTVAIFASPAVLI), and 212-232 (AVPAMALGVLAAMTVFGGIRL). Residues 248–501 (MQPNLPQDAR…EGVLDSGLPA (254 aa)) form the CN hydrolase domain. Glu295 acts as the Proton acceptor in catalysis. Lys360 is an active-site residue. Catalysis depends on Cys413, which acts as the Nucleophile. A helical transmembrane segment spans residues 509 to 529 (ARVGELPAAVLVALVMMLVLL).

Belongs to the CN hydrolase family. Apolipoprotein N-acyltransferase subfamily.

It localises to the cell inner membrane. The catalysed reaction is N-terminal S-1,2-diacyl-sn-glyceryl-L-cysteinyl-[lipoprotein] + a glycerophospholipid = N-acyl-S-1,2-diacyl-sn-glyceryl-L-cysteinyl-[lipoprotein] + a 2-acyl-sn-glycero-3-phospholipid + H(+). It participates in protein modification; lipoprotein biosynthesis (N-acyl transfer). Functionally, catalyzes the phospholipid dependent N-acylation of the N-terminal cysteine of apolipoprotein, the last step in lipoprotein maturation. The polypeptide is Apolipoprotein N-acyltransferase (Rhodopseudomonas palustris (strain ATCC BAA-98 / CGA009)).